The following is a 728-amino-acid chain: Procollagen-lysine,2-oxoglutarate 5-dioxygenase 1 (728 aa).

An N-terminal signal peptide occupies residues 1–18 (MRSLLLLASLAWLLLAQA). Residues N177, N198, and N539 are each glycosylated (N-linked (GlcNAc...) asparagine). Residues 637–728 (QFDLAFVVRY…RYIAVSFVDP (92 aa)) enclose the Fe2OG dioxygenase domain. Positions 657 and 659 each coordinate Fe cation. N-linked (GlcNAc...) asparagine glycosylation is present at N687. H709 lines the Fe cation pocket. R719 is a catalytic residue.

Homodimer. Identified in a complex with P3H3 and P3H4. It depends on Fe(2+) as a cofactor. Requires L-ascorbate as cofactor.

It is found in the rough endoplasmic reticulum membrane. It carries out the reaction L-lysyl-[collagen] + 2-oxoglutarate + O2 = (5R)-5-hydroxy-L-lysyl-[collagen] + succinate + CO2. Its function is as follows. Part of a complex composed of PLOD1, P3H3 and P3H4 that catalyzes hydroxylation of lysine residues in collagen alpha chains and is required for normal assembly and cross-linkling of collagen fibrils. Forms hydroxylysine residues in -Xaa-Lys-Gly- sequences in collagens. These hydroxylysines serve as sites of attachment for carbohydrate units and are essential for the stability of the intermolecular collagen cross-links. In Rattus norvegicus (Rat), this protein is Procollagen-lysine,2-oxoglutarate 5-dioxygenase 1 (Plod1).